Here is a 63-residue protein sequence, read N- to C-terminus: MPIAQLYILDGRSNEQKETLIREVSEAMSRSLDAPIERVRVIITEMPKNHFGIGGEPASKLNR.

Pro2 acts as the Proton acceptor; via imino nitrogen in catalysis.

The protein belongs to the 4-oxalocrotonate tautomerase family. As to quaternary structure, homohexamer.

It catalyses the reaction (2Z,4E)-2-hydroxyhexa-2,4-dienedioate = (3E)-2-oxohex-3-enedioate. It functions in the pathway aromatic compound metabolism; salicylate degradation. Catalyzes the ketonization of 2-hydroxymuconate stereoselectively to yield 2-oxo-3-hexenedioate. The protein is 2-hydroxymuconate tautomerase (nahJ) of Pseudomonas fluorescens.